The chain runs to 208 residues: Tektin bundle-interacting protein 1 (208 aa).

In terms of assembly, microtubule inner protein component of sperm flagellar doublet microtubules. As to expression, expressed in trachea multiciliated cells.

The protein resides in the cytoplasm. The protein localises to the cytoskeleton. It is found in the cilium axoneme. It localises to the flagellum axoneme. In terms of biological role, microtubule inner protein (MIP) part of the dynein-decorated doublet microtubules (DMTs) in cilia axoneme, which is required for motile cilia beating. Located at the center of the tektin bundle where may function to recruit tektins or stabilize the bundle. The protein is Tektin bundle-interacting protein 1 (TEKTIP1) of Bos taurus (Bovine).